Consider the following 345-residue polypeptide: Type II restriction enzyme HgiCI (345 aa).

It carries out the reaction Endonucleolytic cleavage of DNA to give specific double-stranded fragments with terminal 5'-phosphates.. Functionally, a P subtype restriction enzyme that recognizes the double-stranded sequence 5'-GGYRCC-3' and cleaves after G-1. The protein is Type II restriction enzyme HgiCI (hgiCIR) of Herpetosiphon aurantiacus (Herpetosiphon giganteus).